We begin with the raw amino-acid sequence, 968 residues long: RNA polymerase-associated protein RapA (968 aa).

One can recognise a Helicase ATP-binding domain in the interval 164–334 (DVGRRHAPRV…FARLRLLDPN (171 aa)). Position 177–184 (177–184 (DEVGLGKT)) interacts with ATP. The DEAH box signature appears at 280 to 283 (DEAH). Residues 490-662 (RVEWLMGYLT…YLASPVQTEG (173 aa)) form the Helicase C-terminal domain.

The protein belongs to the SNF2/RAD54 helicase family. RapA subfamily. Interacts with the RNAP. Has a higher affinity for the core RNAP than for the holoenzyme. Its ATPase activity is stimulated by binding to RNAP.

Transcription regulator that activates transcription by stimulating RNA polymerase (RNAP) recycling in case of stress conditions such as supercoiled DNA or high salt concentrations. Probably acts by releasing the RNAP, when it is trapped or immobilized on tightly supercoiled DNA. Does not activate transcription on linear DNA. Probably not involved in DNA repair. The protein is RNA polymerase-associated protein RapA of Shigella sonnei (strain Ss046).